The sequence spans 216 residues: NKG2-D type II integral membrane protein (216 aa).

Over 1–51 (MGWIRGRRSRHSWEMSEFHNYNLDLKKSDFSTRWQKQRCPVVKSKCRENAS) the chain is Cytoplasmic. The helical; Signal-anchor for type II membrane protein transmembrane segment at 52–72 (PFFFCCFIAVAMGIRFIIMVT) threads the bilayer. Residues 73–216 (IWSAVFLNSL…NTYICMQRTV (144 aa)) are Extracellular-facing. Intrachain disulfides connect Cys96/Cys105, Cys99/Cys110, Cys127/Cys211, and Cys189/Cys203. The C-type lectin domain occupies 98–213 (PCPKNWICYK…STPNTYICMQ (116 aa)). N-linked (GlcNAc...) asparagine glycosylation is found at Asn131, Asn163, and Asn202.

In terms of assembly, homodimer; disulfide-linked. Heterohexamer composed of two subunits of KLRK1 and four subunits of HCST/DAP10. Interacts (via transmembrane domain) with HCST/DAP10 (via transmembrane domain); the interaction is required for KLRK1 NK cell surface and induces NK cell-mediated cytotoxicity. Does not interact with TYROBP. Interacts with CEACAM1; recruits PTPN6 that dephosphorylates VAV1. Expressed in natural killer (NK) cells, CD8(+) alpha-beta and gamma-delta T-cells. Expressed on essentially all CD56+CD3- NK cells from freshly isolated PBMC. Expressed in interferon-producing killer dendritic cells (IKDCs).

Its subcellular location is the cell membrane. Functions as an activating and costimulatory receptor involved in immunosurveillance upon binding to various cellular stress-inducible ligands displayed at the surface of autologous tumor cells and virus-infected cells. Provides both stimulatory and costimulatory innate immune responses on activated killer (NK) cells, leading to cytotoxic activity. Acts as a costimulatory receptor for T-cell receptor (TCR) in CD8(+) T-cell-mediated adaptive immune responses by amplifying T-cell activation. Stimulates perforin-mediated elimination of ligand-expressing tumor cells. Signaling involves calcium influx, culminating in the expression of TNF-alpha. Participates in NK cell-mediated bone marrow graft rejection. May play a regulatory role in differentiation and survival of NK cells. Binds to ligands belonging to various subfamilies of MHC class I-related glycoproteins including MICA, MICB, RAET1E, RAET1G, RAET1L/ULBP6, ULBP1, ULBP2, ULBP3 (ULBP2&gt;ULBP1&gt;ULBP3) and ULBP4. This chain is NKG2-D type II integral membrane protein (KLRK1), found in Homo sapiens (Human).